Consider the following 88-residue polypeptide: Small ribosomal subunit protein uS15 (88 aa).

This sequence belongs to the universal ribosomal protein uS15 family. As to quaternary structure, part of the 30S ribosomal subunit. Forms a bridge to the 50S subunit in the 70S ribosome, contacting the 23S rRNA.

One of the primary rRNA binding proteins, it binds directly to 16S rRNA where it helps nucleate assembly of the platform of the 30S subunit by binding and bridging several RNA helices of the 16S rRNA. Its function is as follows. Forms an intersubunit bridge (bridge B4) with the 23S rRNA of the 50S subunit in the ribosome. The sequence is that of Small ribosomal subunit protein uS15 from Borrelia garinii subsp. bavariensis (strain ATCC BAA-2496 / DSM 23469 / PBi) (Borreliella bavariensis).